A 573-amino-acid chain; its full sequence is Isocitrate dehydrogenase kinase/phosphatase (573 aa).

Residues 315–321 and K336 each bind ATP; that span reads APGIRGM. The active site involves D371.

It belongs to the AceK family.

The protein resides in the cytoplasm. The catalysed reaction is L-seryl-[isocitrate dehydrogenase] + ATP = O-phospho-L-seryl-[isocitrate dehydrogenase] + ADP + H(+). Its function is as follows. Bifunctional enzyme which can phosphorylate or dephosphorylate isocitrate dehydrogenase (IDH) on a specific serine residue. This is a regulatory mechanism which enables bacteria to bypass the Krebs cycle via the glyoxylate shunt in response to the source of carbon. When bacteria are grown on glucose, IDH is fully active and unphosphorylated, but when grown on acetate or ethanol, the activity of IDH declines drastically concomitant with its phosphorylation. The sequence is that of Isocitrate dehydrogenase kinase/phosphatase from Enterobacter sp. (strain 638).